A 256-amino-acid chain; its full sequence is MADQPMIEMKNVTKVYDNGTVGLKNINLKINKGEFVVIVGLSGAGKSTLLRAINRLHDISEGDILIAGESITKTKGKNLRLMRRKIGMIFQSFNLVKRSSVLRNVSAGRLAYYPTWKTTFNLFTDEDKQRAYEALQSVGMAEKVYSRADELSGGQQQRVAIARVLTQRPEIILADEPTASLDPKTSRQVMEDLKMLNEKFDMTVVANLHSIELAKEFGHRVIGVRAGEIVYDGKMEDTPQSVFDNIYNGGKGKEED.

The ABC transporter domain occupies isoleucine 7–lysine 251. ATP is bound at residue glycine 40–serine 47.

Belongs to the ABC transporter superfamily. Phosphonates importer (TC 3.A.1.9.1) family. As to quaternary structure, the complex is composed of two ATP-binding proteins (PhnC), two transmembrane proteins (PhnE) and a solute-binding protein (PhnD).

Its subcellular location is the cell membrane. It carries out the reaction phosphonate(out) + ATP + H2O = phosphonate(in) + ADP + phosphate + H(+). In terms of biological role, part of the ABC transporter complex PhnCDE involved in phosphonates import. Responsible for energy coupling to the transport system. This Lactobacillus delbrueckii subsp. bulgaricus (strain ATCC 11842 / DSM 20081 / BCRC 10696 / JCM 1002 / NBRC 13953 / NCIMB 11778 / NCTC 12712 / WDCM 00102 / Lb 14) protein is Phosphonates import ATP-binding protein PhnC.